A 35-amino-acid chain; its full sequence is Tamulustoxin (35 aa).

Cystine bridges form between Cys2/Cys22, Cys7/Cys31, and Cys11/Cys33.

Expressed by the venom gland.

The protein localises to the secreted. Functionally, blocks Kv1.6/KCNA6 potassium channels. This chain is Tamulustoxin, found in Hottentotta tamulus (Eastern Indian scorpion).